An 846-amino-acid polypeptide reads, in one-letter code: Major vault protein beta (846 aa).

An N-acetylalanine modification is found at alanine 2. MVP repeat units follow at residues 2-60, 61-115, 116-172, 173-225, 226-280, 281-332, 333-388, 389-458, and 459-521; these read ATPV…IPPR, QYCI…QPVP, LQVI…EPVR, AVII…GFIQ, ALVL…RDIK, AITL…IQNV, NVLS…RRKR, IPLD…STKV, and ITYR…FLGP.

As to quaternary structure, the vault ribonucleoprotein particle is a huge (400 A x 670 A) cage structure of 12.9 MDa. It consists of a dimer of half-vaults, with each half-vault comprising 39 identical major vault protein (MVP) chains. Dictyostelium is one of the few organisms in which the major component is actually two proteins (alpha and beta).

The protein resides in the cytoplasm. The protein localises to the nucleus. Unknown, though MVP-beta is required for normal vault structure. The chain is Major vault protein beta (mvpB) from Dictyostelium discoideum (Social amoeba).